Consider the following 322-residue polypeptide: Arginase (322 aa).

H113, D141, H143, and D145 together coordinate Mn(2+). Residues 143-147 (HADIN), 154-156 (SGN), and D200 contribute to the substrate site. Residues D247 and D249 each contribute to the Mn(2+) site. T261 and E292 together coordinate substrate.

Belongs to the arginase family. Homotrimer. Requires Mn(2+) as cofactor.

The enzyme catalyses L-arginine + H2O = urea + L-ornithine. It participates in nitrogen metabolism; urea cycle; L-ornithine and urea from L-arginine: step 1/1. The polypeptide is Arginase (ARG) (Coccidioides immitis (strain RS) (Valley fever fungus)).